The sequence spans 149 residues: uncharacterized protein (149 aa).

The disordered stretch occupies residues 34 to 94 (HTPCLPKVPR…NPIGSQRIHS (61 aa)). Over residues 56 to 66 (QSPHRQGDRRR) the composition is skewed to basic and acidic residues.

It localises to the mitochondrion. This is an uncharacterized protein from Arabidopsis thaliana (Mouse-ear cress).